The sequence spans 864 residues: Mitochondrial 15S rRNA processing factor CCM1 (864 aa).

A mitochondrion-targeting transit peptide spans 1–76 (MYMARCGPKN…REFSNTLKER (76 aa)). 2 PPR repeats span residues 319–353 (NKQNLTTVIQFYSRKEMTKQAWNTFDTMKFLSTKH) and 356–390 (DICTYNTMLRICEKERNFPKALDLFQEIQDHNIKP).

This sequence belongs to the CCM1 family. Binds to mitochondrial small subunit 15S rRNA.

It is found in the mitochondrion. Its function is as follows. Regulates mitochondrial small subunit maturation by controlling 15S rRNA 5'-end processing. Localizes to the 5' precursor of the 15S rRNA in a position that is subsequently occupied by mS47 in the mature yeast mtSSU. Uses structure and sequence-specific RNA recognition, binding to a single-stranded region of the precursor and specifically recognizing bases -6 to -1. The exchange of Ccm1 for mS47 is coupled to the irreversible removal of precursor rRNA that is accompanied by conformational changes of the mitoribosomal proteins uS5m and mS26. These conformational changes signal completion of 5'-end rRNA processing through protection of the mature 5'-end of the 15S rRNA and stabilization of mS47. The removal of the 5' precursor together with the dissociation of Ccm1 may be catalyzed by the 5'-3' exoribonuclease Pet127. Involved in the specific removal of group I introns in mitochondrial encoded transcripts. This chain is Mitochondrial 15S rRNA processing factor CCM1 (CCM1), found in Saccharomyces cerevisiae (strain Lalvin EC1118 / Prise de mousse) (Baker's yeast).